The primary structure comprises 281 residues: Bifunctional protein FolD (281 aa).

Residues 165-167 and Ser-190 each bind NADP(+); that span reads GRS.

It belongs to the tetrahydrofolate dehydrogenase/cyclohydrolase family. As to quaternary structure, homodimer.

The catalysed reaction is (6R)-5,10-methylene-5,6,7,8-tetrahydrofolate + NADP(+) = (6R)-5,10-methenyltetrahydrofolate + NADPH. It catalyses the reaction (6R)-5,10-methenyltetrahydrofolate + H2O = (6R)-10-formyltetrahydrofolate + H(+). It functions in the pathway one-carbon metabolism; tetrahydrofolate interconversion. Functionally, catalyzes the oxidation of 5,10-methylenetetrahydrofolate to 5,10-methenyltetrahydrofolate and then the hydrolysis of 5,10-methenyltetrahydrofolate to 10-formyltetrahydrofolate. The chain is Bifunctional protein FolD from Polaromonas naphthalenivorans (strain CJ2).